A 92-amino-acid polypeptide reads, in one-letter code: Large ribosomal subunit protein bL27 (92 aa).

A propeptide spanning residues 1 to 9 (MLVMNLQYF) is cleaved from the precursor.

The protein belongs to the bacterial ribosomal protein bL27 family. The N-terminus is cleaved by ribosomal processing cysteine protease Prp.

The protein is Large ribosomal subunit protein bL27 of Heliobacterium modesticaldum (strain ATCC 51547 / Ice1).